Reading from the N-terminus, the 6668-residue chain is Centrosome-associated protein CEP250 (6668 aa).

Coiled coils occupy residues 562 to 589 (KAFH…LQQD), 632 to 666 (TREL…LRAS), 873 to 988 (HTEC…LRSS), 1042 to 1087 (LRMS…HEAA), 1252 to 1307 (VEDL…AVSR), 1333 to 1427 (LESL…LEKK), 1501 to 1538 (RPAA…LGTQ), 1594 to 1688 (REAL…SEVA), 1896 to 1930 (HDIL…TTEK), 1975 to 2224 (EETL…AKQS), 2298 to 3272 (AEDE…LKME), 3298 to 3436 (QQEL…SRAE), 3526 to 3599 (LVQL…AKEE), 3697 to 3773 (CASL…EERR), 3856 to 4137 (TEML…VEAE), 4170 to 4486 (RRKL…LRER), 4515 to 5078 (LETL…FRRR), 5165 to 5202 (LASL…QETL), 5298 to 5731 (LREK…QHRV), and 5927 to 6119 (TQAL…LWRQ).

Proteolytically cleaved; only the full-length form localizes to the inner core, while processed version also localizes to the outer core during the onset of cell division.

It is found in the cytoplasm. It localises to the cytoskeleton. Its subcellular location is the microtubule organizing center. The protein resides in the centrosome. In terms of biological role, part of the centrosome inner core complex. Required for the linking of centrosomal inner and outer cores. This Toxoplasma gondii (strain ATCC 50611 / Me49) protein is Centrosome-associated protein CEP250.